We begin with the raw amino-acid sequence, 327 residues long: Phenylalanine--tRNA ligase alpha subunit (327 aa).

Glu252 is a binding site for Mg(2+).

This sequence belongs to the class-II aminoacyl-tRNA synthetase family. Phe-tRNA synthetase alpha subunit type 1 subfamily. Tetramer of two alpha and two beta subunits. Mg(2+) is required as a cofactor.

The protein localises to the cytoplasm. It carries out the reaction tRNA(Phe) + L-phenylalanine + ATP = L-phenylalanyl-tRNA(Phe) + AMP + diphosphate + H(+). The polypeptide is Phenylalanine--tRNA ligase alpha subunit (Erwinia tasmaniensis (strain DSM 17950 / CFBP 7177 / CIP 109463 / NCPPB 4357 / Et1/99)).